The following is a 413-amino-acid chain: uncharacterized protein (413 aa).

K265 bears the N6-(pyridoxal phosphate)lysine mark.

This sequence belongs to the threonine aldolase family. Requires pyridoxal 5'-phosphate as cofactor.

This is an uncharacterized protein from Caenorhabditis elegans.